Here is a 611-residue protein sequence, read N- to C-terminus: Chaperone protein DnaK (611 aa).

Phosphothreonine; by autocatalysis is present on T173. Positions A579–A592 are enriched in low complexity. The disordered stretch occupies residues A579–K611. Positions V600–K611 are enriched in acidic residues.

The protein belongs to the heat shock protein 70 family.

Acts as a chaperone. The chain is Chaperone protein DnaK from Bacillus mycoides (strain KBAB4) (Bacillus weihenstephanensis).